We begin with the raw amino-acid sequence, 90 residues long: RNA-binding protein Hfq (90 aa).

Positions 9–68 constitute a Sm domain; that stretch reads DPFLNALRRERVPVSIYLVNGIKLQGQVESFDQFVILLKNTVSQMVYKHAISTVVPARPF.

Belongs to the Hfq family. In terms of assembly, homohexamer.

Its function is as follows. RNA chaperone that binds small regulatory RNA (sRNAs) and mRNAs to facilitate mRNA translational regulation in response to envelope stress, environmental stress and changes in metabolite concentrations. Also binds with high specificity to tRNAs. The sequence is that of RNA-binding protein Hfq from Shewanella baltica (strain OS155 / ATCC BAA-1091).